A 217-amino-acid chain; its full sequence is Thiopurine S-methyltransferase (217 aa).

S-adenosyl-L-methionine is bound by residues W11, L46, E67, and R122.

The protein belongs to the class I-like SAM-binding methyltransferase superfamily. TPMT family.

It is found in the cytoplasm. It carries out the reaction S-adenosyl-L-methionine + a thiopurine = S-adenosyl-L-homocysteine + a thiopurine S-methylether.. The polypeptide is Thiopurine S-methyltransferase (Vibrio vulnificus (strain YJ016)).